The primary structure comprises 357 residues: D(4) dopamine receptor (357 aa).

The Extracellular portion of the chain corresponds to 1-32 (MGNRSAADADGLLAGRGPGTGGGAGSPGAAAA). N-linked (GlcNAc...) asparagine glycosylation occurs at asparagine 3. Residues 33-55 (LVGGVLLIGAVLAGNALVCVSVA) traverse the membrane as a helical segment. Topologically, residues 56-65 (AERALQTPTN) are cytoplasmic. A helical membrane pass occupies residues 66–88 (YFIVSLAAADLLLALLVLPLFVY). Aspartate 75 is a binding site for Na(+). The Extracellular portion of the chain corresponds to 89–104 (SEVQGGVWQFSPGLCD). The cysteines at positions 103 and 180 are disulfide-linked. A helical membrane pass occupies residues 105 to 126 (ALMAMDVMLCTASIFNLCAISA). Serine 117 is a binding site for Na(+). Over 127-146 (DRFVAVAVPLSYNRQSGGGR) the chain is Cytoplasmic. The chain crosses the membrane as a helical span at residues 147 to 170 (QLLLIGATWLLSAAVAAPVLCGLN). Over 171 to 186 (DARGRDPAVCRLEDRD) the chain is Extracellular. The helical transmembrane segment at 187–208 (YVVYSSVCSFFLPCPVMLLLYW) threads the bilayer. The Cytoplasmic segment spans residues 209–284 (ATFRGLRRWE…ITGRERKAMR (76 aa)). The disordered stretch occupies residues 225 to 261 (LHGRRPRRPSGPGPPPPEAVETPEAPEAIPTPDATLA). Over residues 233-242 (PSGPGPPPPE) the composition is skewed to pro residues. The segment covering 243-259 (AVETPEAPEAIPTPDAT) has biased composition (low complexity). The helical transmembrane segment at 285 to 307 (VLPVVVGAFLVCWTPFFVVHITG) threads the bilayer. Topologically, residues 308–316 (ALCPACAVP) are extracellular. Cysteine 310 and cysteine 313 are disulfide-bonded. The chain crosses the membrane as a helical span at residues 317 to 339 (PRLVSAVTWLGYVNSALNPLIYT). Residues 340-357 (VFNAEFRAVFRKALRLCC) lie on the Cytoplasmic side of the membrane. Cysteine 357 is lipidated: S-palmitoyl cysteine.

It belongs to the G-protein coupled receptor 1 family. As to quaternary structure, forms homo- and heterooligomers with DRD2. D4.7 allele exhibits higher affinity for homodimers compared to DRD2 heterodimers, while alleles D42. and 4.4 have similar affinities for both. The interaction with DRD2 may modulate agonist-induced downstream signaling. Interacts with CLIC6. Interacts with GPRASP1. May interact with ADORA2A. Interacts with KLHL12. Polyubiquitinated by the BCR(KLHL12) E3 ubiquitin ligase complex: polyubiquitination does not lead to degradation of DRD4 protein. In terms of processing, palmitoylated. Palmitoylation of the C-terminal Cys is important for normal expression at the cell membrane.

The protein localises to the cell membrane. Dopamine receptor responsible for neuronal signaling in the mesolimbic system of the brain, an area of the brain that regulates emotion and complex behavior. Activated by dopamine, but also by epinephrine and norepinephrine, and by numerous synthetic agonists and drugs. Agonist binding triggers signaling via G proteins that inhibit adenylyl cyclase. Modulates the circadian rhythm of contrast sensitivity by regulating the rhythmic expression of NPAS2 in the retinal ganglion cells. The sequence is that of D(4) dopamine receptor (DRD4) from Mustela putorius furo (European domestic ferret).